A 346-amino-acid chain; its full sequence is Elongation factor Ts (346 aa).

Residues 80–83 (TDFV) form an involved in Mg(2+) ion dislocation from EF-Tu region.

The protein belongs to the EF-Ts family.

It is found in the cytoplasm. Functionally, associates with the EF-Tu.GDP complex and induces the exchange of GDP to GTP. It remains bound to the aminoacyl-tRNA.EF-Tu.GTP complex up to the GTP hydrolysis stage on the ribosome. The chain is Elongation factor Ts (tsf) from Streptococcus pneumoniae (strain ATCC BAA-255 / R6).